We begin with the raw amino-acid sequence, 103 residues long: NADH-quinone oxidoreductase subunit K (103 aa).

The next 3 helical transmembrane spans lie at 6 to 26 (LAHY…GIFL), 32 to 52 (IVLL…FVAF), and 63 to 83 (VFVF…LAIL).

Belongs to the complex I subunit 4L family. NDH-1 is composed of 14 different subunits. Subunits NuoA, H, J, K, L, M, N constitute the membrane sector of the complex.

It localises to the cell inner membrane. The catalysed reaction is a quinone + NADH + 5 H(+)(in) = a quinol + NAD(+) + 4 H(+)(out). In terms of biological role, NDH-1 shuttles electrons from NADH, via FMN and iron-sulfur (Fe-S) centers, to quinones in the respiratory chain. The immediate electron acceptor for the enzyme in this species is believed to be ubiquinone. Couples the redox reaction to proton translocation (for every two electrons transferred, four hydrogen ions are translocated across the cytoplasmic membrane), and thus conserves the redox energy in a proton gradient. This chain is NADH-quinone oxidoreductase subunit K, found in Ralstonia pickettii (strain 12D).